We begin with the raw amino-acid sequence, 144 residues long: 3-hydroxyacyl-[acyl-carrier-protein] dehydratase FabZ (144 aa).

Residue His49 is part of the active site.

Belongs to the thioester dehydratase family. FabZ subfamily.

It is found in the cytoplasm. The enzyme catalyses a (3R)-hydroxyacyl-[ACP] = a (2E)-enoyl-[ACP] + H2O. In terms of biological role, involved in unsaturated fatty acids biosynthesis. Catalyzes the dehydration of short chain beta-hydroxyacyl-ACPs and long chain saturated and unsaturated beta-hydroxyacyl-ACPs. In Alkaliphilus oremlandii (strain OhILAs) (Clostridium oremlandii (strain OhILAs)), this protein is 3-hydroxyacyl-[acyl-carrier-protein] dehydratase FabZ.